Consider the following 68-residue polypeptide: MKAEELRKLTDDELKDKLTELKKKLMNLRFQNAVGGLEKPSEIKATKRDIARILTILRERELSKAGGE.

The protein belongs to the universal ribosomal protein uL29 family.

This chain is Large ribosomal subunit protein uL29, found in Persephonella marina (strain DSM 14350 / EX-H1).